The sequence spans 446 residues: Deoxyguanosinetriphosphate triphosphohydrolase-like protein (446 aa).

Residues 1 to 28 (MSSSVWQERRHGEDKQRRNDHRSPFQRD) are disordered. Residues 7–28 (QERRHGEDKQRRNDHRSPFQRD) show a composition bias toward basic and acidic residues. In terms of domain architecture, HD spans 59–252 (RLTHSLEVSQ…MELADDIAYA (194 aa)).

It belongs to the dGTPase family. Type 2 subfamily.

This is Deoxyguanosinetriphosphate triphosphohydrolase-like protein from Shewanella sp. (strain MR-4).